The chain runs to 394 residues: Tryptophan synthase beta chain (394 aa).

N6-(pyridoxal phosphate)lysine is present on K90.

The protein belongs to the TrpB family. Tetramer of two alpha and two beta chains. The cofactor is pyridoxal 5'-phosphate.

The enzyme catalyses (1S,2R)-1-C-(indol-3-yl)glycerol 3-phosphate + L-serine = D-glyceraldehyde 3-phosphate + L-tryptophan + H2O. The protein operates within amino-acid biosynthesis; L-tryptophan biosynthesis; L-tryptophan from chorismate: step 5/5. Its function is as follows. The beta subunit is responsible for the synthesis of L-tryptophan from indole and L-serine. The polypeptide is Tryptophan synthase beta chain (Bacteroides thetaiotaomicron (strain ATCC 29148 / DSM 2079 / JCM 5827 / CCUG 10774 / NCTC 10582 / VPI-5482 / E50)).